We begin with the raw amino-acid sequence, 325 residues long: MNMTKTAMLIALMTVMFMSIGYLLGGGGGMMIALVIAVAMNLFGYWNSDKMVLRMYNAQEVDERSAPEYYRMVSGLAANAGLPMPKVYIIHEDQPNAFATGRNPENAAVAATTGLLNWLSPEEVAGVMAHELAHVQNRDTLTMTIVATLAGAISMLGNFAFFLGGNRENGNGVMGVVGTLLAMIVAPFGAMIVQMAVSRTREYAADKRGAEICGNPLWLSSALGKIARGAKVIPNEEAEHNPATAHMFIINPLSGRGADNLFSTHPDTDNRIAALEQMAAETGIRSAAMTARAAAPSQNSGPWGQRSDNAGGNSNGGSRYRGPWS.

The helical transmembrane segment at Ile-20–Met-40 threads the bilayer. Residue His-130 coordinates Zn(2+). Glu-131 is a catalytic residue. Position 134 (His-134) interacts with Zn(2+). 2 helical membrane passes run Ile-145–Gly-165 and Val-173–Val-193. Residue Glu-202 participates in Zn(2+) binding. Residues Ser-286–Ser-325 form a disordered region. The span at Arg-306–Ser-325 shows a compositional bias: low complexity.

This sequence belongs to the peptidase M48B family. It depends on Zn(2+) as a cofactor.

The protein resides in the cell inner membrane. This chain is Protease HtpX homolog, found in Brucella melitensis biotype 2 (strain ATCC 23457).